Reading from the N-terminus, the 170-residue chain is Putative 4-hydroxy-4-methyl-2-oxoglutarate aldolase (170 aa).

Substrate contacts are provided by residues 85 to 88 (GDMI) and arginine 107. Aspartate 108 contributes to the a divalent metal cation binding site.

The protein belongs to the class II aldolase/RraA-like family. Homotrimer. It depends on a divalent metal cation as a cofactor.

It carries out the reaction 4-hydroxy-4-methyl-2-oxoglutarate = 2 pyruvate. It catalyses the reaction oxaloacetate + H(+) = pyruvate + CO2. Functionally, catalyzes the aldol cleavage of 4-hydroxy-4-methyl-2-oxoglutarate (HMG) into 2 molecules of pyruvate. Also contains a secondary oxaloacetate (OAA) decarboxylase activity due to the common pyruvate enolate transition state formed following C-C bond cleavage in the retro-aldol and decarboxylation reactions. The sequence is that of Putative 4-hydroxy-4-methyl-2-oxoglutarate aldolase from Acinetobacter baylyi (strain ATCC 33305 / BD413 / ADP1).